The sequence spans 194 residues: Cysteine and glycine-rich protein 3 (194 aa).

Positions 1–5 (MPNWG) are interaction with TCAP. The LIM zinc-binding 1 domain maps to 10–61 (CGACDKTVYHAEEIQCNGRSFHKTCFHCMACRKALDSTTVAAHESEIYCKVC). The short motif at 64-69 (RKYGPK) is the Nuclear localization signal element. The tract at residues 94–105 (QSPKPARAATTS) is interaction with CLF2. Phosphoserine occurs at positions 95, 111, and 153. Residues 120–171 (CPRCGKSVYAAEKVMGGGKPWHKTCFPCAICGKSLESTNVTDKDGELYCKVC) form the LIM zinc-binding 2 domain.

Self-associates. Oligomeric in the cytoplasm and monomeric in the nucleus. Homooligomers preferentially form along the actin cytoskeleton. Interacts with TCAP, ACTN2 and NRAP. Interacts with LDHD, SPTB, MYOD1, MYOG, MYF6. Interacts with GLRX3 (via C-terminus); GLRX3 and calcineurin compete for interaction with CSRP3. Interacts with CFL2; the stoichiometry influences F-actin depolymerization and possibly two molecules of CFL2 can interact with one molecule of CSRP3 resulting in the highest functional impact; the interaction is stronger with phosphorylated CFL2. In terms of processing, phosphorylated by PKC/PRKCA. As to expression, high in striated muscle and adult heart.

It localises to the nucleus. It is found in the cytoplasm. The protein resides in the cytoskeleton. The protein localises to the myofibril. Its subcellular location is the sarcomere. It localises to the z line. Its function is as follows. Positive regulator of myogenesis. Acts as a cofactor for myogenic bHLH transcription factors such as MYOD1, and probably MYOG and MYF6. Enhances the DNA-binding activity of the MYOD1:TCF3 isoform E47 complex and may promote formation of a functional MYOD1:TCF3 isoform E47:MEF2A complex involved in myogenesis. Plays a crucial and specific role in the organization of cytosolic structures in cardiomyocytes. Could play a role in mechanical stretch sensing. May be a scaffold protein that promotes the assembly of interacting proteins at Z-line structures. It is essential for calcineurin anchorage to the Z line. Required for stress-induced calcineurin-NFAT activation. The role in regulation of cytoskeleton dynamics by association with CFL2 is reported conflictingly. Proposed to contribute to the maintenance of muscle cell integrity through an actin-based mechanism. Can directly bind to actin filaments, cross-link actin filaments into bundles without polarity selectivity and protect them from dilution- and cofilin-mediated depolymerization; the function seems to involve its self-association. In vitro can inhibit PKC/PRKCA activity. Proposed to be involved in cardiac stress signaling by down-regulating excessive PKC/PRKCA signaling. The sequence is that of Cysteine and glycine-rich protein 3 (Csrp3) from Rattus norvegicus (Rat).